The chain runs to 179 residues: ATP synthase subunit b (179 aa).

The chain crosses the membrane as a helical span at residues 23–43; it reads IFWLIITFGILYVVLSKLILP.

It belongs to the ATPase B chain family. F-type ATPases have 2 components, F(1) - the catalytic core - and F(0) - the membrane proton channel. F(1) has five subunits: alpha(3), beta(3), gamma(1), delta(1), epsilon(1). F(0) has three main subunits: a(1), b(2) and c(10-14). The alpha and beta chains form an alternating ring which encloses part of the gamma chain. F(1) is attached to F(0) by a central stalk formed by the gamma and epsilon chains, while a peripheral stalk is formed by the delta and b chains.

It is found in the cell inner membrane. F(1)F(0) ATP synthase produces ATP from ADP in the presence of a proton or sodium gradient. F-type ATPases consist of two structural domains, F(1) containing the extramembraneous catalytic core and F(0) containing the membrane proton channel, linked together by a central stalk and a peripheral stalk. During catalysis, ATP synthesis in the catalytic domain of F(1) is coupled via a rotary mechanism of the central stalk subunits to proton translocation. Functionally, component of the F(0) channel, it forms part of the peripheral stalk, linking F(1) to F(0). The polypeptide is ATP synthase subunit b (Pelagibacter ubique (strain HTCC1062)).